Reading from the N-terminus, the 160-residue chain is Anaerobic nitrite reductase HBII (160 aa).

A Globin domain is found at 8–157 (GFTEEQEALV…LVAAIKLEMK (150 aa)). A Homodimerization motif is present at residues 41–45 (EIAPS). S51, K65, H69, K99, S103, and H104 together coordinate heme b. The Homodimerization signature appears at 111–123 (DEHFEVTKFALLE).

The protein belongs to the plant globin family. In terms of assembly, homodimer. The cofactor is heme b.

It localises to the cytoplasm. It is found in the nucleus. The catalysed reaction is Fe(III)-heme b-[protein] + nitric oxide + H2O = Fe(II)-heme b-[protein] + nitrite + 2 H(+). Phytoglobin that reduces nitrite to nitric oxide (NO) under anoxic conditions (e.g. during flooding or in waterlogged soil) and upon root nodulation. Required for general plant development and during nodulation, especially for the onset of symbiosis. Monitors nitric oxide (NO) levels during early phase of the nitrogen-fixing symbiosis and buffers oxygen in functioning nodules. May not function as an oxygen storage or transport protein. Has an unusually high affinity for O(2) through a hexacoordinate heme iron because of a very low dissociation constant. In Casuarina glauca (Swamp oak), this protein is Anaerobic nitrite reductase HBII.